The chain runs to 57 residues: Small ribosomal subunit protein eS27 (57 aa).

4 residues coordinate Zn(2+): Cys-10, Cys-13, Cys-29, and Cys-32. A C4-type zinc finger spans residues 10–32; it reads CDDCENEQVLFGKAANTVNCAVC.

Belongs to the eukaryotic ribosomal protein eS27 family. In terms of assembly, part of the 30S ribosomal subunit. The cofactor is Zn(2+).

This chain is Small ribosomal subunit protein eS27, found in Natronomonas pharaonis (strain ATCC 35678 / DSM 2160 / CIP 103997 / JCM 8858 / NBRC 14720 / NCIMB 2260 / Gabara) (Halobacterium pharaonis).